We begin with the raw amino-acid sequence, 730 residues long: Rap1 GTPase-activating protein 2 (730 aa).

A Phosphoserine; by PKG/PRKG1; in vitro modification is found at Ser7. The disordered stretch occupies residues 32–53 (ANSSDATLPDRPLSPPLTAPPT). Phosphoserine is present on Ser45. Thr49 carries the post-translational modification Phosphothreonine. Positions 248–464 (IVSYDEHEVN…RTRAALLDNL (217 aa)) constitute a Rap-GAP domain. Residue Ser507 is modified to Phosphoserine. The disordered stretch occupies residues 509–533 (ETMVGGQKKSHSGGIPGSLSGGISH). Phosphoserine occurs at positions 544, 558, 564, 612, and 613. Positions 552–730 (VKNQSRSPIK…LSHASSGAGH (179 aa)) are disordered. Polar residues predominate over residues 585–613 (DSTSSTPKTPDGGHSSQEIKSETSSNPSS). Residues 618 to 631 (PNKEKPFMKLKENG) are compositionally biased toward basic and acidic residues. Over residues 635 to 647 (SRSSSSTSSVSST) the composition is skewed to low complexity. Residues 661-670 (GSQPSTTSPF) show a composition bias toward polar residues. The segment covering 678–687 (SPSPSSESPS) has biased composition (low complexity). The span at 699 to 712 (RSPTDAKSRNSPRS) shows a compositional bias: polar residues.

In terms of processing, in vitro phosphorylated by cGMP-dependent protein kinase 1 (cGKI) at Ser-7; the phosphorylation probably does not regulate GAP activity. As to expression, isoform 1 and isoform 2 are expressed in platelets with isoform 2 being the predominant form. Expressed in lymphocytes, heart, testis and pancreas.

The protein resides in the cytoplasm. Its subcellular location is the perinuclear region. Functionally, GTPase activator for the nuclear Ras-related regulatory protein RAP-1A (KREV-1), converting it to the putatively inactive GDP-bound state. The chain is Rap1 GTPase-activating protein 2 (RAP1GAP2) from Homo sapiens (Human).